A 342-amino-acid chain; its full sequence is Dihydroorotase (342 aa).

The Zn(2+) site is built by His-13 and His-15. Residues 15–17 and Asn-41 contribute to the substrate site; that span reads HLR. Zn(2+) is bound by residues Lys-98, His-135, and His-173. Lys-98 carries the N6-carboxylysine modification. His-135 serves as a coordination point for substrate. Leu-218 is a binding site for substrate. Asp-246 contributes to the Zn(2+) binding site. The active site involves Asp-246. Substrate-binding residues include His-250 and Ala-262.

The protein belongs to the metallo-dependent hydrolases superfamily. DHOase family. Class II DHOase subfamily. In terms of assembly, homodimer. It depends on Zn(2+) as a cofactor.

The enzyme catalyses (S)-dihydroorotate + H2O = N-carbamoyl-L-aspartate + H(+). It participates in pyrimidine metabolism; UMP biosynthesis via de novo pathway; (S)-dihydroorotate from bicarbonate: step 3/3. In terms of biological role, catalyzes the reversible cyclization of carbamoyl aspartate to dihydroorotate. The chain is Dihydroorotase from Aliivibrio salmonicida (strain LFI1238) (Vibrio salmonicida (strain LFI1238)).